The chain runs to 489 residues: Anthranilate synthase component 1 1 (489 aa).

262-264 (PYS) is an L-tryptophan binding site. The disordered stretch occupies residues 288–309 (DRIETEPIAGTRPRGETPDADD). Residue 297–298 (GT) coordinates chorismate. Residues 300-309 (PRGETPDADD) show a composition bias toward basic and acidic residues. Residue E324 coordinates Mg(2+). Residues Y412, R432, 446 to 448 (GAG), and G448 contribute to the chorismate site. E461 serves as a coordination point for Mg(2+).

Belongs to the anthranilate synthase component I family. In terms of assembly, tetramer of two components I and two components II. It depends on Mg(2+) as a cofactor.

The enzyme catalyses chorismate + L-glutamine = anthranilate + pyruvate + L-glutamate + H(+). It functions in the pathway amino-acid biosynthesis; L-tryptophan biosynthesis; L-tryptophan from chorismate: step 1/5. The protein is Anthranilate synthase component 1 1 (trpE1) of Haloarcula marismortui (strain ATCC 43049 / DSM 3752 / JCM 8966 / VKM B-1809) (Halobacterium marismortui).